Consider the following 523-residue polypeptide: Synaptotagmin-10 (523 aa).

Over 1-55 (MSFRKEDGVSSLCQKALHIITELCFAGQVEWDKCSGIFPADRSGQGGGGTDISVS) the chain is Vesicular. The cysteine motif stretch occupies residues 13-35 (CQKALHIITELCFAGQVEWDKCS). A helical membrane pass occupies residues 56–76 (LLAVVVSFCGLALLVVSLFVF). Residues 77–523 (WKLCWPCWKS…CSSPRPPSTP (447 aa)) lie on the Cytoplasmic side of the membrane. Threonine 136 bears the Phosphothreonine mark. 2 C2 domains span residues 231–352 (TCGK…TVWK) and 363–496 (DLGE…THWH). Positions 262, 268, 320, 321, 322, 325, 328, 394, 400, 454, and 456 each coordinate Ca(2+).

This sequence belongs to the synaptotagmin family. As to quaternary structure, homodimer; disulfide-linked via the cysteine motif. Can also form heterodimers with SYT3, SYT6, SYT7 and SYT9. It depends on Ca(2+) as a cofactor. In terms of tissue distribution, highly expressed in the olfactory bulb.

It localises to the cytoplasmic vesicle. Its subcellular location is the secretory vesicle membrane. Ca(2+) sensor specifically required for the Ca(2+)-dependent exocytosis of secretory vesicles containing IGF1 in neurons of the olfactory bulb. Exocytosis of IGF1 is required for sensory perception of smell. Not involved in Ca(2+)-dependent synaptic vesicle exocytosis. Acts through Ca(2+) and phospholipid binding to the C2 domain: Ca(2+) induces binding of the C2-domains to phospholipid membranes and to assembled SNARE-complexes; both actions contribute to triggering exocytosis. This is Synaptotagmin-10 from Mus musculus (Mouse).